The chain runs to 518 residues: Serine incorporator 4 (518 aa).

10 helical membrane-spanning segments follow: residues 59 to 79 (CSRLFYILLHVGASAICCLLL), 122 to 142 (VCAGTATFHLLQAVLLVHLHS), 153 to 173 (SFWLLKLLFLLGLCAIAFCIP), 184 to 204 (IGICGGFAFILLQLVLITAFA), 222 to 242 (FLAVLLATLGFYSMAGVGAVL), 259 to 279 (LLSLHLCFCGLISFLSIAPCI), 286 to 306 (SGLLQASVISCYIMYLTFSAL), 338 to 357 (ISLAMLSASIMYACVLFACN), 427 to 447 (AFHFVFFLASLYVMVTLTNWF), and 470 to 490 (VASCWACVLLYLGLLLAPLCW).

The protein belongs to the TDE1 family.

It is found in the membrane. Incorporates a polar amino acid serine into membranes and facilitates the synthesis of two serine-derived lipids, phosphatidylserine and sphingolipids. The sequence is that of Serine incorporator 4 (SERINC4) from Homo sapiens (Human).